We begin with the raw amino-acid sequence, 137 residues long: Small ribosomal subunit protein uS12 (137 aa).

A disordered region spans residues 1-57 (MPTINQLVRKPRKSKVEKSKSPALNVGYNSLKRVPTNESAPQKRGVATRVGTMTPKK). The residue at position 102 (D102) is a 3-methylthioaspartic acid.

This sequence belongs to the universal ribosomal protein uS12 family. As to quaternary structure, part of the 30S ribosomal subunit. Contacts proteins S8 and S17. May interact with IF1 in the 30S initiation complex.

Functionally, with S4 and S5 plays an important role in translational accuracy. Its function is as follows. Interacts with and stabilizes bases of the 16S rRNA that are involved in tRNA selection in the A site and with the mRNA backbone. Located at the interface of the 30S and 50S subunits, it traverses the body of the 30S subunit contacting proteins on the other side and probably holding the rRNA structure together. The combined cluster of proteins S8, S12 and S17 appears to hold together the shoulder and platform of the 30S subunit. This is Small ribosomal subunit protein uS12 from Streptococcus gordonii (strain Challis / ATCC 35105 / BCRC 15272 / CH1 / DL1 / V288).